The chain runs to 177 residues: Hypoxanthine phosphoribosyltransferase (177 aa).

Positions 43 and 44 each coordinate diphosphate. A GMP-binding site is contributed by E99. Position 99 (E99) interacts with IMP. Residues E99 and D100 each contribute to the Mg(2+) site. D103 serves as the catalytic Proton acceptor. GMP is bound by residues 103–108, K131, and D159; that span reads DSGKTL. Residues 103-108 and K131 each bind IMP; that span reads DSGKTL. R165 provides a ligand contact to diphosphate.

It belongs to the purine/pyrimidine phosphoribosyltransferase family. In terms of assembly, homotetramer. It depends on Mg(2+) as a cofactor.

The protein localises to the cytoplasm. The catalysed reaction is IMP + diphosphate = hypoxanthine + 5-phospho-alpha-D-ribose 1-diphosphate. It catalyses the reaction GMP + diphosphate = guanine + 5-phospho-alpha-D-ribose 1-diphosphate. It functions in the pathway purine metabolism; IMP biosynthesis via salvage pathway; IMP from hypoxanthine: step 1/1. Purine salvage pathway enzyme which catalyzes the transfer of the ribosyl-5-phosphate group from 5-phospho-alpha-D-ribose 1-diphosphate (PRPP) to the N9 position of hypoxanthine to yield IMP (inosine 5'-monophosphate). To a lesser extent, can also act on guanine leading to GMP, but shows a highly less efficient activity with xanthine. This Buchnera aphidicola subsp. Schizaphis graminum (strain Sg) protein is Hypoxanthine phosphoribosyltransferase (hpt).